Reading from the N-terminus, the 421-residue chain is 4-hydroxy-3-methylbut-2-en-1-yl diphosphate synthase (flavodoxin) (421 aa).

Residues cysteine 300, cysteine 303, cysteine 346, and glutamate 353 each contribute to the [4Fe-4S] cluster site.

It belongs to the IspG family. Requires [4Fe-4S] cluster as cofactor.

The catalysed reaction is (2E)-4-hydroxy-3-methylbut-2-enyl diphosphate + oxidized [flavodoxin] + H2O + 2 H(+) = 2-C-methyl-D-erythritol 2,4-cyclic diphosphate + reduced [flavodoxin]. It participates in isoprenoid biosynthesis; isopentenyl diphosphate biosynthesis via DXP pathway; isopentenyl diphosphate from 1-deoxy-D-xylulose 5-phosphate: step 5/6. In terms of biological role, converts 2C-methyl-D-erythritol 2,4-cyclodiphosphate (ME-2,4cPP) into 1-hydroxy-2-methyl-2-(E)-butenyl 4-diphosphate. This chain is 4-hydroxy-3-methylbut-2-en-1-yl diphosphate synthase (flavodoxin), found in Laribacter hongkongensis (strain HLHK9).